The primary structure comprises 298 residues: uncharacterized protein (298 aa).

This is an uncharacterized protein from Acanthamoeba polyphaga mimivirus (APMV).